The primary structure comprises 303 residues: MEKVIQELKEREVGKVLANEPLANHTTMKIGGPADVLVIPSSVDAVKDIMDVIKKYDVKWTVIGRGSNLLVLDEGIRGVVIKLGAGLDHLELEGEQVTVGGGYSVVRLATSLSKKGLSGLEFAAGIPGSVGGAVYMNAGAHGSDMSEILVKAHILFEDGTIEWLTNEQMDFSYRTSVLQKKRPGVCLEAVLQLEQKDKESIVQQMQSNKDYRKNTQPYSSPCAGSIFRNPLPNHAGNLVEKAGLKGYQIGGAKISEMHGNFIVNAGGASAKDVLDLIDHVKKTIREKYEIDMHTEVEIIGGNR.

The FAD-binding PCMH-type domain occupies 29-196 (KIGGPADVLV…LEAVLQLEQK (168 aa)). Residue arginine 174 is part of the active site. The Proton donor role is filled by serine 225. Residue glutamate 295 is part of the active site.

It belongs to the MurB family. The cofactor is FAD.

Its subcellular location is the cytoplasm. The enzyme catalyses UDP-N-acetyl-alpha-D-muramate + NADP(+) = UDP-N-acetyl-3-O-(1-carboxyvinyl)-alpha-D-glucosamine + NADPH + H(+). Its pathway is cell wall biogenesis; peptidoglycan biosynthesis. Cell wall formation. The sequence is that of UDP-N-acetylenolpyruvoylglucosamine reductase (murB) from Bacillus subtilis (strain 168).